The sequence spans 102 residues: ATP-dependent Clp protease adapter protein ClpS (102 aa).

Belongs to the ClpS family. In terms of assembly, binds to the N-terminal domain of the chaperone ClpA.

Its function is as follows. Involved in the modulation of the specificity of the ClpAP-mediated ATP-dependent protein degradation. The chain is ATP-dependent Clp protease adapter protein ClpS from Shewanella denitrificans (strain OS217 / ATCC BAA-1090 / DSM 15013).